The chain runs to 227 residues: Ribonuclease 3 (227 aa).

Residues 4–126 (LDRLERKIGY…IIGAMSLDQG (123 aa)) form the RNase III domain. A Mg(2+)-binding site is contributed by E39. The active site involves D43. Residues D112 and E115 each coordinate Mg(2+). Residue E115 is part of the active site. In terms of domain architecture, DRBM spans 153–226 (DAKTRLQEYL…AEQILKELDI (74 aa)).

It belongs to the ribonuclease III family. In terms of assembly, homodimer. Mg(2+) serves as cofactor.

Its subcellular location is the cytoplasm. The enzyme catalyses Endonucleolytic cleavage to 5'-phosphomonoester.. Digests double-stranded RNA. Involved in the processing of primary rRNA transcript to yield the immediate precursors to the large and small rRNAs (23S and 16S). Processes some mRNAs, and tRNAs when they are encoded in the rRNA operon. Processes pre-crRNA and tracrRNA of type II CRISPR loci if present in the organism. This is Ribonuclease 3 from Haemophilus influenzae (strain 86-028NP).